A 95-amino-acid polypeptide reads, in one-letter code: MADDKPKEGVKTENNDHINLKVAGQDGSVVQFKIKRQTPLSKLMKAYCERQGLSMRQIRFRFDGQPINETDTPAQLEMEDEDTIDVFQQQTGGSF.

K11 is covalently cross-linked (Glycyl lysine isopeptide (Lys-Gly) (interchain with G-Cter in SUMO)). The region spanning D16–F95 is the Ubiquitin-like domain. Residue G93 forms a Glycyl lysine isopeptide (Gly-Lys) (interchain with K-? in acceptor proteins) linkage. The propeptide occupies S94–F95.

It belongs to the ubiquitin family. SUMO subfamily. In terms of assembly, interacts with sae2 and ube2i. Covalently attached to a number of proteins, including top2. Polymeric chains can be formed through Lys-11 cross-linking. Post-translationally, cleavage of precursor form by a sentrin-specific protease is necessary for function.

It localises to the nucleus. Ubiquitin-like protein that can be covalently attached to proteins as a monomer or as a lysine-linked polymer. Covalent attachment via an isopeptide bond to its substrates requires prior activation by the E1 complex sae1-sae2 and linkage to the E2 enzyme ube2i, and can be promoted by an E3 ligase such as pias1-4. This post-translational modification on lysine residues of proteins plays a crucial role in a number of cellular processes such as nuclear transport, DNA replication and repair, mitosis and signal transduction. Polymeric sumo2 chains are also susceptible to polyubiquitination which functions as a signal for proteasomal degradation of modified proteins. The chain is Small ubiquitin-related modifier 2-A (sumo2-a) from Xenopus laevis (African clawed frog).